The sequence spans 141 residues: Nucleoside diphosphate kinase (141 aa).

Residues Lys-11, Phe-59, Arg-87, Thr-93, Arg-104, and Asn-114 each coordinate ATP. The active-site Pros-phosphohistidine intermediate is His-117.

It belongs to the NDK family. In terms of assembly, homotetramer. Mg(2+) serves as cofactor.

The protein resides in the cytoplasm. It catalyses the reaction a 2'-deoxyribonucleoside 5'-diphosphate + ATP = a 2'-deoxyribonucleoside 5'-triphosphate + ADP. The catalysed reaction is a ribonucleoside 5'-diphosphate + ATP = a ribonucleoside 5'-triphosphate + ADP. Its function is as follows. Major role in the synthesis of nucleoside triphosphates other than ATP. The ATP gamma phosphate is transferred to the NDP beta phosphate via a ping-pong mechanism, using a phosphorylated active-site intermediate. The polypeptide is Nucleoside diphosphate kinase (Burkholderia multivorans (strain ATCC 17616 / 249)).